The chain runs to 358 residues: Peroxisome biogenesis protein 3-1 (358 aa).

A helical membrane pass occupies residues 15–32; the sequence is ILVTTTCLGSGYLLYKLY. Residues 33–62 are a coiled coil; that stretch reads NAHTRKLADLERELANERENDEIIKTQMKA.

This sequence belongs to the peroxin-3 family.

It localises to the peroxisome membrane. Involved in morphology determination of peroxisomes, but not in import of peroxisomal matrix proteins. May act as a docking factor for PEX19 and be necessary for the import of peroxisomal membrane proteins in the peroxisomes. The polypeptide is Peroxisome biogenesis protein 3-1 (PEX3-1) (Arabidopsis thaliana (Mouse-ear cress)).